Here is a 222-residue protein sequence, read N- to C-terminus: Ras-related protein Rab11C (222 aa).

A GTP-binding site is contributed by 22–29 (GDSAVGKT). Positions 44–52 (SKATIGVEF) match the Effector region motif. GTP contacts are provided by residues 70-74 (DTAGQ) and 128-131 (NKTD). S-geranylgeranyl cysteine attachment occurs at residues Cys219 and Cys220.

This sequence belongs to the small GTPase superfamily. Rab family.

It is found in the cell membrane. This chain is Ras-related protein Rab11C (RAB11C), found in Nicotiana tabacum (Common tobacco).